Here is a 329-residue protein sequence, read N- to C-terminus: Bifunctional muramidase/DL-endopeptidase CwlT (329 aa).

A signal peptide spans 1–29 (MISKKVVLPLVFSAPFIFFFVLCIVVVMT). The muramidase stretch occupies residues 59–192 (RFRAVFEKYA…SYVDHVMRYV (134 aa)). A NlpC/P60 domain is found at 206–329 (MDFYETVMKE…DHLVSFGRIK (124 aa)). The active-site Nucleophile is the C237. Residue H290 is the Proton acceptor of the active site. The active site involves N302.

This sequence belongs to the peptidase C40 family.

The protein localises to the secreted. The enzyme catalyses Hydrolysis of (1-&gt;4)-beta-linkages between N-acetylmuramic acid and N-acetyl-D-glucosamine residues in a peptidoglycan and between N-acetyl-D-glucosamine residues in chitodextrins.. In terms of biological role, exhibits both muramidase and DL-endopeptidase activities. The N-terminal region acts as a N-acetylmuramidase, which cleaves the bond between N-acetylmuramic acid and N-acetyl-D-glucosamine (MurNAc-GlcNAc) in peptidoglycan. The C-terminal region acts as a DL-endopeptidase that cleaves the bond between D-gamma-glutamate and meso-diaminopimelic acid. Cannot degrade purified B.anthracis peptidoglycan, which differ from those of B.subtilis. CwlT is required for ICEBs1 conjugation: the muramidase activity is essential, whereas the peptidase activity is partially dispensable for transfer of ICEBs1. The sequence is that of Bifunctional muramidase/DL-endopeptidase CwlT from Bacillus subtilis (strain 168).